The chain runs to 245 residues: Orotidine 5'-phosphate decarboxylase (245 aa).

Residues Asp-22, Lys-44, 71 to 80 (DLKFHDIPNT), Thr-131, Arg-192, Gln-201, Gly-221, and Arg-222 contribute to the substrate site. The Proton donor role is filled by Lys-73.

Belongs to the OMP decarboxylase family. Type 1 subfamily. Homodimer.

It carries out the reaction orotidine 5'-phosphate + H(+) = UMP + CO2. Its pathway is pyrimidine metabolism; UMP biosynthesis via de novo pathway; UMP from orotate: step 2/2. Functionally, catalyzes the decarboxylation of orotidine 5'-monophosphate (OMP) to uridine 5'-monophosphate (UMP). This chain is Orotidine 5'-phosphate decarboxylase, found in Salmonella choleraesuis (strain SC-B67).